Here is a 362-residue protein sequence, read N- to C-terminus: Cytochrome c peroxidase, mitochondrial (362 aa).

A mitochondrion-targeting transit peptide spans Met1 to Tyr40. The active-site Proton acceptor is His121. His244 is a binding site for heme b. Trp260 acts as the Tryptophan radical intermediate in catalysis.

This sequence belongs to the peroxidase family. Cytochrome c peroxidase subfamily. Forms a one-to-one complex with cytochrome c. Heme b is required as a cofactor.

The protein resides in the mitochondrion matrix. Its subcellular location is the mitochondrion intermembrane space. The catalysed reaction is 2 Fe(II)-[cytochrome c] + H2O2 + 2 H(+) = 2 Fe(III)-[cytochrome c] + 2 H2O. In terms of biological role, destroys radicals which are normally produced within the cells and which are toxic to biological systems. The polypeptide is Cytochrome c peroxidase, mitochondrial (CCP1) (Pyricularia oryzae (strain 70-15 / ATCC MYA-4617 / FGSC 8958) (Rice blast fungus)).